The following is a 185-amino-acid chain: Elongation factor P (185 aa).

The protein belongs to the elongation factor P family.

It is found in the cytoplasm. The protein operates within protein biosynthesis; polypeptide chain elongation. Functionally, involved in peptide bond synthesis. Stimulates efficient translation and peptide-bond synthesis on native or reconstituted 70S ribosomes in vitro. Probably functions indirectly by altering the affinity of the ribosome for aminoacyl-tRNA, thus increasing their reactivity as acceptors for peptidyl transferase. This is Elongation factor P from Thermosynechococcus vestitus (strain NIES-2133 / IAM M-273 / BP-1).